The primary structure comprises 305 residues: Short-chain dehydrogenase/reductase VdtF (305 aa).

Positions 28 and 98 each coordinate NADP(+). Ser-192 functions as the Proton donor in the catalytic mechanism. The NADP(+) site is built by Tyr-206, Lys-210, and Thr-241. The Proton acceptor role is filled by Tyr-206. The active-site Lowers pKa of active site Tyr is Lys-210.

Belongs to the short-chain dehydrogenases/reductases (SDR) family.

It catalyses the reaction methyl 2-[(3S)-9,10-dihydroxy-7-methoxy-1-oxo-1H,3H,4H-naphtho[2,3-c]pyran-3-yl]acetate + AH2 = semiviriditoxin + A. It carries out the reaction 9,10-dihydroxy-7-methoxy-3-(2-oxopropyl)-1H-benzo[g]isochromen-1-one + AH2 = (3S)-9,10-dihydroxy-7-methoxy-3-(2-oxopropyl)-1H,3H,4H-naphtho[2,3-c]pyran-1-one + A. The protein operates within secondary metabolite biosynthesis. Functionally, short-chain dehydrogenase/reductase; part of the gene cluster that mediates the biosynthesis of viriditoxin, one of the 'classical' secondary metabolites produced by fungi and that has antibacterial activity. The first step is performed by the polyketide synthase VdtA which condenses one acetyl-CoA and 6 malonyl-CoA units to form the heptaketide monomer backbone of viriditoxin. The product of VdtA is then O-methylated on C7 by the O-methyltransferase VdtC. The O-methyl group is important for the stereoselective coupling of the monomers at the final step of viriditoxin biosynthesis. The short-chain dehydrogenase/reductase VdtF then acts as a stereospecific reductase converting the pyrone to dihydropyrone via the reduction of the C3-C4 double bond. The FAD-binding monooxygenase VdtE then converts the ketone group into a methyl-ester group to yield semi-viriditoxin. Finally, the laccase VdtB is involved in dimerization of 2 semi-viriditoxin molecules to yield the final viriditoxin. VdtB is responsible for the regioselective 6,6'-coupling of semi-viriditoxin, which yields (M)-viriditoxin and (P)-viriditoxin at a ratio of 1:2. The non-catalytic carboxylesterase-like protein VdtD affects the stereochemistical outcome of the coupling. The highly reducing polyketide synthase VdtX is not involved in viriditoxin synthesis, but might possibly play a role in the production of additional metabolites not identified yet. This Byssochlamys spectabilis (Paecilomyces variotii) protein is Short-chain dehydrogenase/reductase VdtF.